The sequence spans 320 residues: Aurora kinase B (320 aa).

Positions 1–10 are enriched in basic and acidic residues; sequence MQNKENREPR. Positions 1–38 are disordered; the sequence is MQNKENREPRVQQTPSAGVGPLRVEMNPDTHAVSGPGR. The Protein kinase domain maps to 53 to 303; the sequence is FDIGRPLGKG…LRSVMEHPWV (251 aa). Residues 59–67 and lysine 82 contribute to the ATP site; that span reads LGKGKFGNV. The active-site Proton acceptor is aspartate 176.

The protein belongs to the protein kinase superfamily. Ser/Thr protein kinase family. Aurora subfamily. Component of the chromosomal passenger complex (CPC).

The protein resides in the nucleus. It localises to the chromosome. Its subcellular location is the centromere. It is found in the cytoplasm. The protein localises to the cytoskeleton. The protein resides in the spindle. It localises to the midbody. The enzyme catalyses L-seryl-[protein] + ATP = O-phospho-L-seryl-[protein] + ADP + H(+). It carries out the reaction L-threonyl-[protein] + ATP = O-phospho-L-threonyl-[protein] + ADP + H(+). Kinase activity is stimulated by cell-cycle specific phosphorylation. Its function is as follows. Serine/threonine-protein kinase component of the chromosomal passenger complex (CPC), a complex that acts as a key regulator of mitosis. The CPC complex has essential functions at the centromere in ensuring correct chromosome alignment and segregation and is required for chromatin-induced microtubule stabilization and spindle assembly. Involved in the bipolar attachment of spindle microtubules to kinetochores and is a key regulator for the onset of cytokinesis during mitosis. Required for central/midzone spindle assembly and cleavage furrow formation. Key component of the cytokinesis checkpoint, a process required to delay abscission to prevent both premature resolution of intercellular chromosome bridges and accumulation of DNA damage. Phosphorylates 'Ser-10' of histone H3 during mitosis. This Danio rerio (Zebrafish) protein is Aurora kinase B (aurkb).